A 262-amino-acid polypeptide reads, in one-letter code: Type III pantothenate kinase (262 aa).

ATP is bound at residue 9–16 (DAGNSRIK). Substrate is bound by residues tyrosine 96 and 103-106 (GSDR). Residue aspartate 105 is the Proton acceptor of the active site. An ATP-binding site is contributed by threonine 129. A substrate-binding site is contributed by threonine 189.

The protein belongs to the type III pantothenate kinase family. As to quaternary structure, homodimer. NH4(+) is required as a cofactor. It depends on K(+) as a cofactor.

The protein resides in the cytoplasm. It catalyses the reaction (R)-pantothenate + ATP = (R)-4'-phosphopantothenate + ADP + H(+). The protein operates within cofactor biosynthesis; coenzyme A biosynthesis; CoA from (R)-pantothenate: step 1/5. Its function is as follows. Catalyzes the phosphorylation of pantothenate (Pan), the first step in CoA biosynthesis. The chain is Type III pantothenate kinase from Burkholderia ambifaria (strain MC40-6).